A 289-amino-acid polypeptide reads, in one-letter code: tRNA(Ile)-lysidine synthase (289 aa).

Residue 11–16 (SGGPDS) coordinates ATP.

Belongs to the tRNA(Ile)-lysidine synthase family.

It localises to the cytoplasm. The enzyme catalyses cytidine(34) in tRNA(Ile2) + L-lysine + ATP = lysidine(34) in tRNA(Ile2) + AMP + diphosphate + H(+). Its function is as follows. Ligates lysine onto the cytidine present at position 34 of the AUA codon-specific tRNA(Ile) that contains the anticodon CAU, in an ATP-dependent manner. Cytidine is converted to lysidine, thus changing the amino acid specificity of the tRNA from methionine to isoleucine. The protein is tRNA(Ile)-lysidine synthase of Mycoplasma pneumoniae (strain ATCC 29342 / M129 / Subtype 1) (Mycoplasmoides pneumoniae).